A 287-amino-acid chain; its full sequence is Oxaloacetate decarboxylase (287 aa).

Residue Ser-50 participates in substrate binding. Asp-88 serves as a coordination point for Mg(2+). The substrate site is built by Arg-159 and His-235.

This sequence belongs to the isocitrate lyase/PEP mutase superfamily. Oxaloacetate decarboxylase family. As to quaternary structure, homotetramer; dimer of dimers. Mg(2+) is required as a cofactor.

The catalysed reaction is oxaloacetate + H(+) = pyruvate + CO2. In terms of biological role, catalyzes the decarboxylation of oxaloacetate into pyruvate. Seems to play a role in maintaining cellular concentrations of bicarbonate and pyruvate. The chain is Oxaloacetate decarboxylase from Pseudomonas paraeruginosa (strain DSM 24068 / PA7) (Pseudomonas aeruginosa (strain PA7)).